The primary structure comprises 372 residues: MKSFLLSRQAIHRISLLSSKTPTFCRNFSAITSTISHSDRHLRSYDEQTPFQNVEIPRPISSFNRYFHFTRESRLSESSAAIDDSNDQEEDDEDGTTNEFLSRFVWIMRGKVSEAYPDCDKKMIDGMLLLIVEKVVEEIERGGFNKVGSAPPSPSSEFSDDLWATIWEVSNTVLKDMEKERKKEKMKQYVQSPEVMEMCRFAGEIGIRGDLLRELRFKWAREKMDDAEFYESLEQQRDLDNSIRESETVDGEVEEEGFVPSDEVESRSISLPKRKGKLKYKIYGLELSDPKWVEMADKIHEAEEEADWREPKPVTGKCKLVMEKLESLQEGDDPSGLLAEWAELLEPNRVDWIALINQLREGNTHAYLKVRL.

Residues 1–28 (MKSFLLSRQAIHRISLLSSKTPTFCRNF) constitute a mitochondrion transit peptide. The interval 240 to 265 (DNSIRESETVDGEVEEEGFVPSDEVE) is disordered. The span at 248–257 (TVDGEVEEEG) shows a compositional bias: acidic residues.

In terms of assembly, component of the mitochondrial ribosome small subunit.

The protein localises to the mitochondrion. Required for karyogamy during female gametophyte development, when the two polar nuclei fuse to form the diploid central cell nucleus. This Arabidopsis thaliana (Mouse-ear cress) protein is Small ribosomal subunit protein mS77 (rPPR2).